Reading from the N-terminus, the 249-residue chain is ATP synthase subunit a (249 aa).

Transmembrane regions (helical) follow at residues 30–50, 84–104, 113–133, 143–163, 196–216, and 221–241; these read SAYM…GSAG, FFPL…VGII, HIIV…IYGF, IFVP…IEVF, LLAG…GMVV, and LELL…CIYL.

The protein belongs to the ATPase A chain family. F-type ATPases have 2 components, CF(1) - the catalytic core - and CF(0) - the membrane proton channel. CF(1) has five subunits: alpha(3), beta(3), gamma(1), delta(1), epsilon(1). CF(0) has four main subunits: a, b, b' and c.

The protein localises to the cell inner membrane. In terms of biological role, key component of the proton channel; it plays a direct role in the translocation of protons across the membrane. In Rhodopseudomonas palustris (strain BisA53), this protein is ATP synthase subunit a.